The sequence spans 242 residues: Uridylate kinase (242 aa).

15-18 (KLSG) serves as a coordination point for ATP. The segment at 23–28 (GAEGFG) is involved in allosteric activation by GTP. Glycine 57 provides a ligand contact to UMP. Positions 58 and 62 each coordinate ATP. UMP is bound by residues aspartate 77 and 138–145 (TGNPFFTT). ATP is bound by residues threonine 165, tyrosine 171, and aspartate 174.

It belongs to the UMP kinase family. In terms of assembly, homohexamer.

The protein localises to the cytoplasm. It catalyses the reaction UMP + ATP = UDP + ADP. It participates in pyrimidine metabolism; CTP biosynthesis via de novo pathway; UDP from UMP (UMPK route): step 1/1. With respect to regulation, allosterically activated by GTP. Inhibited by UTP. Its function is as follows. Catalyzes the reversible phosphorylation of UMP to UDP. This Photorhabdus laumondii subsp. laumondii (strain DSM 15139 / CIP 105565 / TT01) (Photorhabdus luminescens subsp. laumondii) protein is Uridylate kinase.